Here is a 149-residue protein sequence, read N- to C-terminus: Cell division protein SepF (149 aa).

Positions 12–57 (SNEEDDYYEEDGYEQSQQQEQQTTQQTSSQPRFVRQTTQSQTPAGL) are disordered. Acidic residues predominate over residues 13-24 (NEEDDYYEEDGY). Residues 25 to 41 (EQSQQQEQQTTQQTSSQ) are compositionally biased toward low complexity. Polar residues predominate over residues 46 to 57 (RQTTQSQTPAGL).

Belongs to the SepF family. As to quaternary structure, homodimer. Interacts with FtsZ.

It localises to the cytoplasm. Functionally, cell division protein that is part of the divisome complex and is recruited early to the Z-ring. Probably stimulates Z-ring formation, perhaps through the cross-linking of FtsZ protofilaments. Its function overlaps with FtsA. The polypeptide is Cell division protein SepF (Leuconostoc mesenteroides subsp. mesenteroides (strain ATCC 8293 / DSM 20343 / BCRC 11652 / CCM 1803 / JCM 6124 / NCDO 523 / NBRC 100496 / NCIMB 8023 / NCTC 12954 / NRRL B-1118 / 37Y)).